Here is a 465-residue protein sequence, read N- to C-terminus: SHC-transforming protein 1 (465 aa).

The region spanning Met-44–Glu-227 is the PID domain. The tract at residues Glu-228–Pro-369 is CH1. Residues Val-281–Phe-315 form a disordered region. Residues Trp-370 to Val-461 enclose the SH2 domain.

As to quaternary structure, interacts with grb2. Highly expressed in oocytes and embryo. Also expressed in liver. Detected in ovary, testis and heart and to a lesser extent in liver (at protein level).

Its subcellular location is the cytoplasm. Its function is as follows. Implicated in ras-dependent oocyte maturation induced by insulin/IGF1. This chain is SHC-transforming protein 1 (shc1), found in Xenopus laevis (African clawed frog).